A 113-amino-acid chain; its full sequence is UPF0145 protein SynWH7803_1684 (113 aa).

Belongs to the UPF0145 family.

The sequence is that of UPF0145 protein SynWH7803_1684 from Synechococcus sp. (strain WH7803).